Here is a 968-residue protein sequence, read N- to C-terminus: MPFTLGQRWISDTESELGLGTVVAVDARTVTLLFPSTGENRLYARSDSPVTRVMFNPGDTITSHDGWQMQVEEVKEENGLLTYIGTRLDTEESGVALREVFLDSKLVFSKPQDRLFAGQIDRMDRFALRYRARKYSSEQFRMPYSGLRGQRTSLIPHQLNIAHDVGRRHAPRVLLADEVGLGKTIEAGMILHQQLLSGAAERVLIIVPETLQHQWLVEMLRRFNLRFALFDDERYAEAQHDAYNPFDTEQLVICSLDFARRSKQRLEHLCEAEWDLLVVDEAHHLVWSEDAPSREYQAIEQLAEHMPGVLLLTATPEQLGMESHFARLRLLDPNRFHDFAQFVEEQKNYRPVADAVAMLLAGNKLSNDELNMLGEMIGEQDIEPLLQAANSDSEDAQSARQELVSMLMDRHGTSRVLFRNTRNGVKGFPKRELHTIKLPLPTQYQTAIKVSGIMGARKSAEDRARDMLYPERIYQEFEGDNATWWNFDPRVEWLMGYLTSHRSQKVLVICAKAATALQLEQVLREREGIRAAVFHEGMSIIERDRAAAWFAEEDTGAQVLLCSEIGSEGRNFQFASHMVMFDLPFNPDLLEQRIGRLDRIGQAHDIQIHVPYLEKTAQSVLVRWYHEGLDAFEHTCPTGRTIYDSVYNDLINYLASPDQTEGFDDLIKNCREQHEALKAQLEQGRDRLLEIHSNGGEKAQALAESIEEQDDDTNLIAFAMNLLDIIGINQDDRGDNMIVLTPSDHMLVPDFPGLSEDGITITFDREVALAREDAQFITWEHPLIRNGLDLILSGDTGSSTISLLKNKALPVGTLLVELIYVVEAQAPKQLQLNRFLPPTPVRMLLDKNGNNLAAQVEFETFNRQLNAVNRHTGSKLVNAVQQDVHAILQLGEAQIEKSARALIDAARNEADEKLSAELSRLEALRAVNPNIRDDELTAIESNRQQVMESLDQAGWRLDALRLIVVTHQ.

The Helicase ATP-binding domain maps to 164 to 334; it reads DVGRRHAPRV…FARLRLLDPN (171 aa). 177–184 contacts ATP; it reads DEVGLGKT. Positions 280-283 match the DEAH box motif; sequence DEAH. The region spanning 490 to 662 is the Helicase C-terminal domain; that stretch reads RVEWLMGYLT…YLASPDQTEG (173 aa).

The protein belongs to the SNF2/RAD54 helicase family. RapA subfamily. In terms of assembly, interacts with the RNAP. Has a higher affinity for the core RNAP than for the holoenzyme. Its ATPase activity is stimulated by binding to RNAP.

Its function is as follows. Transcription regulator that activates transcription by stimulating RNA polymerase (RNAP) recycling in case of stress conditions such as supercoiled DNA or high salt concentrations. Probably acts by releasing the RNAP, when it is trapped or immobilized on tightly supercoiled DNA. Does not activate transcription on linear DNA. Probably not involved in DNA repair. This Shigella boydii serotype 4 (strain Sb227) protein is RNA polymerase-associated protein RapA.